Consider the following 193-residue polypeptide: Probable chorismate pyruvate-lyase (193 aa).

Arginine 81, leucine 119, and glutamate 177 together coordinate substrate.

It belongs to the UbiC family.

Its subcellular location is the cytoplasm. The catalysed reaction is chorismate = 4-hydroxybenzoate + pyruvate. Its pathway is cofactor biosynthesis; ubiquinone biosynthesis. In terms of biological role, removes the pyruvyl group from chorismate, with concomitant aromatization of the ring, to provide 4-hydroxybenzoate (4HB) for the ubiquinone pathway. This Idiomarina loihiensis (strain ATCC BAA-735 / DSM 15497 / L2-TR) protein is Probable chorismate pyruvate-lyase.